Here is a 208-residue protein sequence, read N- to C-terminus: Tektin bundle-interacting protein 1 (208 aa).

As to quaternary structure, microtubule inner protein component of sperm flagellar doublet microtubules. Expressed in trachea multiciliated cells.

Its subcellular location is the cytoplasm. It is found in the cytoskeleton. The protein localises to the cilium axoneme. The protein resides in the flagellum axoneme. Microtubule inner protein (MIP) part of the dynein-decorated doublet microtubules (DMTs) in cilia axoneme, which is required for motile cilia beating. Located at the center of the tektin bundle where may function to recruit tektins or stabilize the bundle. The sequence is that of Tektin bundle-interacting protein 1 (TEKTIP1) from Bos taurus (Bovine).